Here is a 322-residue protein sequence, read N- to C-terminus: uncharacterized protein (322 aa).

Residues 34-286 (KFKQKIFKIP…QRLSKDKVPE (253 aa)) form the Radical SAM core domain. 3 residues coordinate [4Fe-4S] cluster: Cys-50, Cys-58, and Cys-61.

It belongs to the radical SAM superfamily. [4Fe-4S] cluster serves as cofactor.

This is an uncharacterized protein from Methanocaldococcus jannaschii (strain ATCC 43067 / DSM 2661 / JAL-1 / JCM 10045 / NBRC 100440) (Methanococcus jannaschii).